The chain runs to 111 residues: MAMPNLGDMMKQIQQAGEKMQDVQKQLEKIVAHGEAGGGMVKVSVSGKQKLLSLTIDPDIMDDAEMVQDLVLAAVNNALDESARLAQEEISKVTGGMMNPADILKNLNLGQ.

The protein belongs to the YbaB/EbfC family. In terms of assembly, homodimer.

It is found in the cytoplasm. The protein resides in the nucleoid. In terms of biological role, binds to DNA and alters its conformation. May be involved in regulation of gene expression, nucleoid organization and DNA protection. This chain is Nucleoid-associated protein Ppha_1174, found in Pelodictyon phaeoclathratiforme (strain DSM 5477 / BU-1).